The following is a 459-amino-acid chain: Argininosuccinate lyase (459 aa).

This sequence belongs to the lyase 1 family. Argininosuccinate lyase subfamily.

It localises to the cytoplasm. It carries out the reaction 2-(N(omega)-L-arginino)succinate = fumarate + L-arginine. The protein operates within amino-acid biosynthesis; L-arginine biosynthesis; L-arginine from L-ornithine and carbamoyl phosphate: step 3/3. This is Argininosuccinate lyase from Prochlorococcus marinus (strain MIT 9301).